The chain runs to 241 residues: N-acetylmuramoyl-L-alanine amidase Rv3717 (241 aa).

Residues 1–24 (MIVGVLVAAATPIISSASATPANI) form the signal peptide. The MurNAc-LAA domain occupies 29–230 (VFIDPGHNGA…KYANALVRGV (202 aa)). Position 35 (His35) interacts with Zn(2+). Positions 45–69 (RQVPTGRGGTKNCQASGTSTNSGYP) are disordered. Over residues 55–67 (KNCQASGTSTNSG) the composition is skewed to polar residues. Cys57 and Cys105 form a disulfide bridge. Glu70 and His125 together coordinate Zn(2+). The Proton donor/acceptor role is filled by Glu200.

The protein belongs to the N-acetylmuramoyl-L-alanine amidase 3 family. As to quaternary structure, monomer. It depends on Zn(2+) as a cofactor.

It is found in the periplasm. It catalyses the reaction Hydrolyzes the link between N-acetylmuramoyl residues and L-amino acid residues in certain cell-wall glycopeptides.. The protein operates within cell wall degradation; peptidoglycan degradation. With respect to regulation, the structure reveals a short flexible hairpin turn that partially occludes the active site and may be involved in autoregulation. Its function is as follows. Cell-wall hydrolase that hydrolyzes the amide bond between N-acetylmuramic acid and L-alanine in cell-wall glycopeptides. Is able to hydrolyze the cell walls of several bacterial species (i.e. Paenibacillus sp., B.avium, E.coli DH5alpha, E.aerogenes, L.acidophilus, B.thuringiensis, B.pumilus, B.subtilis and E.coli W3110), thereby showing that it is a cell-wall hydrolase with broad-spectrum activity. May have a role in peptidoglycan fragment recycling. This Mycobacterium tuberculosis (strain ATCC 25618 / H37Rv) protein is N-acetylmuramoyl-L-alanine amidase Rv3717.